A 180-amino-acid polypeptide reads, in one-letter code: ATP-dependent protease subunit HslV (180 aa).

Residue threonine 5 is part of the active site. 3 residues coordinate Na(+): glycine 165, cysteine 168, and threonine 171.

This sequence belongs to the peptidase T1B family. HslV subfamily. A double ring-shaped homohexamer of HslV is capped on each side by a ring-shaped HslU homohexamer. The assembly of the HslU/HslV complex is dependent on binding of ATP.

The protein localises to the cytoplasm. The enzyme catalyses ATP-dependent cleavage of peptide bonds with broad specificity.. With respect to regulation, allosterically activated by HslU binding. Protease subunit of a proteasome-like degradation complex believed to be a general protein degrading machinery. The chain is ATP-dependent protease subunit HslV from Helicobacter pylori (strain G27).